The primary structure comprises 560 residues: Formate--tetrahydrofolate ligase (560 aa).

70–77 (TPAGEGKT) lines the ATP pocket.

It belongs to the formate--tetrahydrofolate ligase family.

It carries out the reaction (6S)-5,6,7,8-tetrahydrofolate + formate + ATP = (6R)-10-formyltetrahydrofolate + ADP + phosphate. Its pathway is one-carbon metabolism; tetrahydrofolate interconversion. The protein is Formate--tetrahydrofolate ligase of Methanocorpusculum labreanum (strain ATCC 43576 / DSM 4855 / Z).